A 224-amino-acid chain; its full sequence is UPF0502 protein Psyr_2419 (224 aa).

The protein belongs to the UPF0502 family.

The chain is UPF0502 protein Psyr_2419 from Pseudomonas syringae pv. syringae (strain B728a).